We begin with the raw amino-acid sequence, 366 residues long: Histidinol-phosphate aminotransferase 1 (366 aa).

Lys226 is subject to N6-(pyridoxal phosphate)lysine.

It belongs to the class-II pyridoxal-phosphate-dependent aminotransferase family. Histidinol-phosphate aminotransferase subfamily. As to quaternary structure, homodimer. The cofactor is pyridoxal 5'-phosphate.

It catalyses the reaction L-histidinol phosphate + 2-oxoglutarate = 3-(imidazol-4-yl)-2-oxopropyl phosphate + L-glutamate. It participates in amino-acid biosynthesis; L-histidine biosynthesis; L-histidine from 5-phospho-alpha-D-ribose 1-diphosphate: step 7/9. The sequence is that of Histidinol-phosphate aminotransferase 1 from Mannheimia succiniciproducens (strain KCTC 0769BP / MBEL55E).